A 336-amino-acid chain; its full sequence is MNSQNELHPNWLALTTLPLQLKRFVRAGDPDFIAESPKAVKHQIDGLNGAEAREFYKEVLDAPTTCQPNLPSTHKTAQTRREPERILVPFDKSKFFRLATSNKVEELSQMKASEEDLNSRDSFGWTALMMAACEGATEAVSWLVQRGVQVETSDKSGNTALKLAQRKGHLDVVHLLESLPILEETSEEDESVDGNNPFYCEICKRDYKETPWPIHQTSTVHQFNLKALPAHKLHKFNISAKNRGLQLMVKQGWDQEHGLGPSQSGRLYPVKTVLRKQRTGLGIEQQSARVSHFGAFDLNAVRRRDPIYQPRRTRSDMQREKVREWKRERYLRRVLS.

ANK repeat units lie at residues 123-152 and 156-185; these read FGWTALMMAACEGATEAVSWLVQRGVQVET and SGNTALKLAQRKGHLDVVHLLESLPILEET. Residues 240 to 286 form the G-patch domain; sequence AKNRGLQLMVKQGWDQEHGLGPSQSGRLYPVKTVLRKQRTGLGIEQQ.

The protein is G patch domain and ankyrin repeat-containing protein 1 homolog of Drosophila melanogaster (Fruit fly).